Reading from the N-terminus, the 211-residue chain is Protein-L-isoaspartate O-methyltransferase (211 aa).

The active site involves serine 60.

It belongs to the methyltransferase superfamily. L-isoaspartyl/D-aspartyl protein methyltransferase family.

It is found in the cytoplasm. It carries out the reaction [protein]-L-isoaspartate + S-adenosyl-L-methionine = [protein]-L-isoaspartate alpha-methyl ester + S-adenosyl-L-homocysteine. Functionally, catalyzes the methyl esterification of L-isoaspartyl residues in peptides and proteins that result from spontaneous decomposition of normal L-aspartyl and L-asparaginyl residues. It plays a role in the repair and/or degradation of damaged proteins. The protein is Protein-L-isoaspartate O-methyltransferase of Pseudomonas syringae pv. syringae (strain B728a).